The following is a 144-amino-acid chain: Large ribosomal subunit protein uL15 (144 aa).

The disordered stretch occupies residues 1–57; that stretch reads MKLNDLSPAPGSRREKHRPGRGIGSGLGKTGGRGHKGQTSRSGGSIAPGFEGGQQPL. Positions 21–31 are enriched in gly residues; that stretch reads RGIGSGLGKTG.

The protein belongs to the universal ribosomal protein uL15 family. As to quaternary structure, part of the 50S ribosomal subunit.

In terms of biological role, binds to the 23S rRNA. The chain is Large ribosomal subunit protein uL15 from Pseudomonas putida (strain ATCC 700007 / DSM 6899 / JCM 31910 / BCRC 17059 / LMG 24140 / F1).